A 92-amino-acid chain; its full sequence is Acylphosphatase (92 aa).

Positions 5 to 92 constitute an Acylphosphatase-like domain; sequence RVKVKVNGRV…GVFERFEVRF (88 aa). Active-site residues include Arg-20 and Asn-38.

It belongs to the acylphosphatase family.

The catalysed reaction is an acyl phosphate + H2O = a carboxylate + phosphate + H(+). This Syntrophotalea carbinolica (strain DSM 2380 / NBRC 103641 / GraBd1) (Pelobacter carbinolicus) protein is Acylphosphatase (acyP).